We begin with the raw amino-acid sequence, 497 residues long: Zinc metalloproteinase nas-28 (497 aa).

An N-terminal signal peptide occupies residues 1–14; it reads MFFPVVFFIPFVLG. Positions 15–120 are excised as a propeptide; the sequence is APTQKALEKI…IENGNYRSKR (106 aa). N-linked (GlcNAc...) asparagine glycosylation occurs at asparagine 76. In terms of domain architecture, Peptidase M12A spans 121 to 319; that stretch reads QAIVDTTNFW…IGVNKLYNCT (199 aa). Cystine bridges form between cysteine 164–cysteine 318, cysteine 185–cysteine 206, cysteine 328–cysteine 339, cysteine 331–cysteine 342, cysteine 344–cysteine 353, cysteine 364–cysteine 398, and cysteine 427–cysteine 447. Histidine 214 provides a ligand contact to Zn(2+). Residue glutamate 215 is part of the active site. 2 residues coordinate Zn(2+): histidine 218 and histidine 224. An N-linked (GlcNAc...) asparagine glycan is attached at asparagine 317. An EGF-like domain is found at 324-354; the sequence is IQMKCSNCGITDSRNCNQCKCPRYFTGASCD. Residues 364–483 enclose the CUB domain; sequence CNGAVLQATS…LTFSIQYRAV (120 aa). N-linked (GlcNAc...) asparagine glycosylation is present at asparagine 394.

Zn(2+) is required as a cofactor.

It is found in the secreted. Metalloprotease. The chain is Zinc metalloproteinase nas-28 (nas-28) from Caenorhabditis elegans.